The sequence spans 297 residues: Phosphatidylglycerol--prolipoprotein diacylglyceryl transferase (297 aa).

4 helical membrane passes run Phe-20 to Ile-40, Ile-58 to Glu-78, Ile-104 to Ile-124, and Ile-133 to Gly-153. An a 1,2-diacyl-sn-glycero-3-phospho-(1'-sn-glycerol)-binding site is contributed by Arg-154. Helical transmembrane passes span Thr-194–Tyr-214, Gly-225–Leu-245, and Ala-266–Leu-286.

This sequence belongs to the Lgt family.

Its subcellular location is the cell inner membrane. The enzyme catalyses L-cysteinyl-[prolipoprotein] + a 1,2-diacyl-sn-glycero-3-phospho-(1'-sn-glycerol) = an S-1,2-diacyl-sn-glyceryl-L-cysteinyl-[prolipoprotein] + sn-glycerol 1-phosphate + H(+). The protein operates within protein modification; lipoprotein biosynthesis (diacylglyceryl transfer). Its function is as follows. Catalyzes the transfer of the diacylglyceryl group from phosphatidylglycerol to the sulfhydryl group of the N-terminal cysteine of a prolipoprotein, the first step in the formation of mature lipoproteins. This chain is Phosphatidylglycerol--prolipoprotein diacylglyceryl transferase, found in Prochlorococcus marinus subsp. pastoris (strain CCMP1986 / NIES-2087 / MED4).